We begin with the raw amino-acid sequence, 172 residues long: Large ribosomal subunit protein uL10 (172 aa).

Belongs to the universal ribosomal protein uL10 family. In terms of assembly, part of the ribosomal stalk of the 50S ribosomal subunit. The N-terminus interacts with L11 and the large rRNA to form the base of the stalk. The C-terminus forms an elongated spine to which L12 dimers bind in a sequential fashion forming a multimeric L10(L12)X complex.

In terms of biological role, forms part of the ribosomal stalk, playing a central role in the interaction of the ribosome with GTP-bound translation factors. This chain is Large ribosomal subunit protein uL10, found in Dinoroseobacter shibae (strain DSM 16493 / NCIMB 14021 / DFL 12).